A 1015-amino-acid chain; its full sequence is SKI family transcriptional corepressor 2 (1015 aa).

Disordered regions lie at residues 280-316 and 518-934; these read HLLGAPPPPPPPPPPLAELAGAPHAHHKRPRFDDDDD and GAAG…KKDV. Residues 284-295 are compositionally biased toward pro residues; that stretch reads APPPPPPPPPPL. Low complexity predominate over residues 575–600; that stretch reads PPADSVAAAGAGAAAAGSGPAGSRVP. Residues 628 to 637 show a composition bias toward basic and acidic residues; sequence GGKDDAESLA. Positions 653 to 669 are enriched in basic residues; it reads HPHHHHHPHHHHHHHHP. Composition is skewed to pro residues over residues 670-684 and 694-708; these read PQPPSPLLLLPPQPD and APPPPPPPPPPPPLA. 2 stretches are compositionally biased toward acidic residues: residues 730 to 745 and 754 to 774; these read DSSEDEDDEEEEQEVD and GEEEEEGRDPDDDEEEDEETE. The span at 793–803 shows a compositional bias: basic and acidic residues; sequence PSEKGSSRDRA. A compositionally biased stretch (pro residues) spans 832–842; it reads DLPPPPPPPLA. Basic and acidic residues-rich tracts occupy residues 861–877, 885–899, and 912–922; these read PSLEEQPSYKDSQKTKE, TKDDNSFSDKNKEHS, and FWRERSGEHTQ.

The protein belongs to the SKI family. Interacts with SMAD2 and SMAD3. As to expression, expressed in cerebellum, spinal cord and testis. Isoform 2 is present in cerebellum (at protein level).

It localises to the nucleus. It is found in the cytoplasm. Functionally, exhibits transcriptional repressor activity. Acts as a TGF-beta antagonist in the nervous system. This Homo sapiens (Human) protein is SKI family transcriptional corepressor 2.